Consider the following 110-residue polypeptide: Chagasin (110 aa).

The BC loop signature appears at 29–34; the sequence is NPTTGF. The short motif at 59–68 is the DE loop element; sequence PPDSKLLGAG. Residues 91–100 carry the FG loop motif; that stretch reads RPWTGPSHDS.

This sequence belongs to the protease inhibitor I42 family. As to quaternary structure, interacts with cruzipain.

The protein localises to the flagellar pocket. It localises to the cytoplasmic vesicle. The protein resides in the cell surface. Functionally, cysteine protease inhibitor. Inhibits cysteine protease cruzipain. The chain is Chagasin (cha) from Trypanosoma cruzi.